A 667-amino-acid polypeptide reads, in one-letter code: 1-deoxy-D-xylulose-5-phosphate synthase (667 aa).

Thiamine diphosphate is bound by residues His73 and 113–115 (SHA). Asp145 provides a ligand contact to Mg(2+). Residues 146–147 (GA), Asn175, Tyr297, and Glu379 contribute to the thiamine diphosphate site. Residue Asn175 coordinates Mg(2+).

Belongs to the transketolase family. DXPS subfamily. In terms of assembly, homodimer. Requires Mg(2+) as cofactor. The cofactor is thiamine diphosphate.

The enzyme catalyses D-glyceraldehyde 3-phosphate + pyruvate + H(+) = 1-deoxy-D-xylulose 5-phosphate + CO2. The protein operates within metabolic intermediate biosynthesis; 1-deoxy-D-xylulose 5-phosphate biosynthesis; 1-deoxy-D-xylulose 5-phosphate from D-glyceraldehyde 3-phosphate and pyruvate: step 1/1. Catalyzes the acyloin condensation reaction between C atoms 2 and 3 of pyruvate and glyceraldehyde 3-phosphate to yield 1-deoxy-D-xylulose-5-phosphate (DXP). This chain is 1-deoxy-D-xylulose-5-phosphate synthase, found in Kocuria rhizophila (strain ATCC 9341 / DSM 348 / NBRC 103217 / DC2201).